The following is a 464-amino-acid chain: Phosphoglucosamine mutase (464 aa).

S112 acts as the Phosphoserine intermediate in catalysis. Positions 112, 252, 254, and 256 each coordinate Mg(2+). S112 carries the post-translational modification Phosphoserine.

This sequence belongs to the phosphohexose mutase family. It depends on Mg(2+) as a cofactor. In terms of processing, activated by phosphorylation.

It carries out the reaction alpha-D-glucosamine 1-phosphate = D-glucosamine 6-phosphate. Its function is as follows. Catalyzes the conversion of glucosamine-6-phosphate to glucosamine-1-phosphate. This is Phosphoglucosamine mutase from Synechococcus sp. (strain CC9902).